The primary structure comprises 874 residues: Leucine--tRNA ligase (874 aa).

The 'HIGH' region motif lies at 43-53 (PYPSGRIHIGH). Residues 630 to 634 (KMSKS) carry the 'KMSKS' region motif. Lys633 provides a ligand contact to ATP.

This sequence belongs to the class-I aminoacyl-tRNA synthetase family.

Its subcellular location is the cytoplasm. It carries out the reaction tRNA(Leu) + L-leucine + ATP = L-leucyl-tRNA(Leu) + AMP + diphosphate. The protein is Leucine--tRNA ligase of Bradyrhizobium sp. (strain ORS 278).